A 417-amino-acid polypeptide reads, in one-letter code: Aromatic-amino-acid aminotransferase 1 (417 aa).

Lys258 carries the post-translational modification N6-(pyridoxal phosphate)lysine.

Belongs to the class-I pyridoxal-phosphate-dependent aminotransferase family. Homodimer. Pyridoxal 5'-phosphate serves as cofactor.

The catalysed reaction is an aromatic L-alpha-amino acid + 2-oxoglutarate = an aromatic oxo-acid + L-glutamate. Functionally, catalyzes the transamination of phenylalanine, tyrosine and tryptophan. Shows virtually no activity towards aspartic acid, alanine, valine or isoleucine. The chain is Aromatic-amino-acid aminotransferase 1 from Thermococcus litoralis (strain ATCC 51850 / DSM 5473 / JCM 8560 / NS-C).